The sequence spans 425 residues: Serine--tRNA ligase (425 aa).

Position 233 to 235 (233 to 235 (TAE)) interacts with L-serine. Position 264-266 (264-266 (RAE)) interacts with ATP. Glu287 provides a ligand contact to L-serine. 351–354 (EISS) contributes to the ATP binding site. An L-serine-binding site is contributed by Ser387.

This sequence belongs to the class-II aminoacyl-tRNA synthetase family. Type-1 seryl-tRNA synthetase subfamily. In terms of assembly, homodimer. The tRNA molecule binds across the dimer.

It localises to the cytoplasm. The enzyme catalyses tRNA(Ser) + L-serine + ATP = L-seryl-tRNA(Ser) + AMP + diphosphate + H(+). It carries out the reaction tRNA(Sec) + L-serine + ATP = L-seryl-tRNA(Sec) + AMP + diphosphate + H(+). The protein operates within aminoacyl-tRNA biosynthesis; selenocysteinyl-tRNA(Sec) biosynthesis; L-seryl-tRNA(Sec) from L-serine and tRNA(Sec): step 1/1. Catalyzes the attachment of serine to tRNA(Ser). Is also able to aminoacylate tRNA(Sec) with serine, to form the misacylated tRNA L-seryl-tRNA(Sec), which will be further converted into selenocysteinyl-tRNA(Sec). This Clostridium perfringens (strain SM101 / Type A) protein is Serine--tRNA ligase.